The following is a 398-amino-acid chain: Methionine import ATP-binding protein MetN 2 (398 aa).

An ABC transporter domain is found at 43–282 (VSLEQVGKVF…PRHGATRALL (240 aa)). 79–86 (GRSGAGKS) lines the ATP pocket.

Belongs to the ABC transporter superfamily. Methionine importer (TC 3.A.1.24) family. As to quaternary structure, the complex is composed of two ATP-binding proteins (MetN), two transmembrane proteins (MetI) and a solute-binding protein (MetQ).

The protein resides in the cell inner membrane. The catalysed reaction is L-methionine(out) + ATP + H2O = L-methionine(in) + ADP + phosphate + H(+). It carries out the reaction D-methionine(out) + ATP + H2O = D-methionine(in) + ADP + phosphate + H(+). Part of the ABC transporter complex MetNIQ involved in methionine import. Responsible for energy coupling to the transport system. The chain is Methionine import ATP-binding protein MetN 2 from Burkholderia lata (strain ATCC 17760 / DSM 23089 / LMG 22485 / NCIMB 9086 / R18194 / 383).